A 120-amino-acid polypeptide reads, in one-letter code: Flagellar protein FliT (120 aa).

A required for homodimerization region spans residues 1 to 50 (MNDFISSLNNWQALYALSNTMLSLANSGQWDELIEQEVKYVTLVEAIARN). The interval 59-97 (FQEKARELLTKVLANEAALKIKLQARMEELRVLIEQNGN) is fliD binding.

Belongs to the FliT family. Homodimer. Interacts with FliD and FlhC.

The protein localises to the cytoplasm. Its subcellular location is the cytosol. Dual-function protein that regulates the transcription of class 2 flagellar operons and that also acts as an export chaperone for the filament-capping protein FliD. As a transcriptional regulator, acts as an anti-FlhDC factor; it directly binds FlhC, thus inhibiting the binding of the FlhC/FlhD complex to class 2 promoters, resulting in decreased expression of class 2 flagellar operons. As a chaperone, effects FliD transition to the membrane by preventing its premature polymerization, and by directing it to the export apparatus. The protein is Flagellar protein FliT of Cronobacter sakazakii (strain ATCC BAA-894) (Enterobacter sakazakii).